The following is a 335-amino-acid chain: Adenosine deaminase (335 aa).

2 residues coordinate Zn(2+): H12 and H14. The substrate site is built by H14 and D16. H197 contributes to the Zn(2+) binding site. E200 serves as the catalytic Proton donor. D278 is a binding site for Zn(2+).

Belongs to the metallo-dependent hydrolases superfamily. Adenosine and AMP deaminases family. Adenosine deaminase subfamily. It depends on Zn(2+) as a cofactor.

It carries out the reaction adenosine + H2O + H(+) = inosine + NH4(+). It catalyses the reaction 2'-deoxyadenosine + H2O + H(+) = 2'-deoxyinosine + NH4(+). In terms of biological role, catalyzes the hydrolytic deamination of adenosine and 2-deoxyadenosine. This Clostridium botulinum (strain Langeland / NCTC 10281 / Type F) protein is Adenosine deaminase.